The primary structure comprises 89 residues: Small ribosomal subunit protein uS15 (89 aa).

The protein belongs to the universal ribosomal protein uS15 family. In terms of assembly, part of the 30S ribosomal subunit. Forms a bridge to the 50S subunit in the 70S ribosome, contacting the 23S rRNA.

In terms of biological role, one of the primary rRNA binding proteins, it binds directly to 16S rRNA where it helps nucleate assembly of the platform of the 30S subunit by binding and bridging several RNA helices of the 16S rRNA. Forms an intersubunit bridge (bridge B4) with the 23S rRNA of the 50S subunit in the ribosome. This is Small ribosomal subunit protein uS15 from Vibrio vulnificus (strain YJ016).